A 285-amino-acid chain; its full sequence is Bifunctional protein FolD (285 aa).

NADP(+) is bound by residues 165-167 (GRS) and S190.

Belongs to the tetrahydrofolate dehydrogenase/cyclohydrolase family. As to quaternary structure, homodimer.

It carries out the reaction (6R)-5,10-methylene-5,6,7,8-tetrahydrofolate + NADP(+) = (6R)-5,10-methenyltetrahydrofolate + NADPH. The enzyme catalyses (6R)-5,10-methenyltetrahydrofolate + H2O = (6R)-10-formyltetrahydrofolate + H(+). The protein operates within one-carbon metabolism; tetrahydrofolate interconversion. Its function is as follows. Catalyzes the oxidation of 5,10-methylenetetrahydrofolate to 5,10-methenyltetrahydrofolate and then the hydrolysis of 5,10-methenyltetrahydrofolate to 10-formyltetrahydrofolate. The protein is Bifunctional protein FolD of Ligilactobacillus salivarius (strain UCC118) (Lactobacillus salivarius).